The following is a 121-amino-acid chain: Small ribosomal subunit protein uS13 (121 aa).

A disordered region spans residues 91-121; sequence HRRGLPVRGQNTKNNARTRKGPSKTVAGKKK. Residues 106-121 are compositionally biased toward basic residues; it reads ARTRKGPSKTVAGKKK.

Belongs to the universal ribosomal protein uS13 family. In terms of assembly, part of the 30S ribosomal subunit. Forms a loose heterodimer with protein S19. Forms two bridges to the 50S subunit in the 70S ribosome.

Located at the top of the head of the 30S subunit, it contacts several helices of the 16S rRNA. In the 70S ribosome it contacts the 23S rRNA (bridge B1a) and protein L5 of the 50S subunit (bridge B1b), connecting the 2 subunits; these bridges are implicated in subunit movement. Contacts the tRNAs in the A and P-sites. The polypeptide is Small ribosomal subunit protein uS13 (Listeria monocytogenes serotype 4b (strain CLIP80459)).